A 346-amino-acid polypeptide reads, in one-letter code: Dihydroorotate dehydrogenase (quinone) (346 aa).

Residues 62–66 and threonine 86 contribute to the FMN site; that span reads AGMDK. Residue lysine 66 coordinates substrate. 111–115 contributes to the substrate binding site; that stretch reads NRMGF. Asparagine 142 and asparagine 175 together coordinate FMN. Asparagine 175 serves as a coordination point for substrate. The Nucleophile role is filled by serine 178. A substrate-binding site is contributed by asparagine 180. 2 residues coordinate FMN: lysine 211 and valine 239. Position 240-241 (240-241) interacts with substrate; the sequence is NT. FMN-binding positions include glycine 261, glycine 289, and 310-311; that span reads YT.

The protein belongs to the dihydroorotate dehydrogenase family. Type 2 subfamily. In terms of assembly, monomer. The cofactor is FMN.

Its subcellular location is the cell membrane. It catalyses the reaction (S)-dihydroorotate + a quinone = orotate + a quinol. It functions in the pathway pyrimidine metabolism; UMP biosynthesis via de novo pathway; orotate from (S)-dihydroorotate (quinone route): step 1/1. Its function is as follows. Catalyzes the conversion of dihydroorotate to orotate with quinone as electron acceptor. The protein is Dihydroorotate dehydrogenase (quinone) of Thermus thermophilus (strain ATCC BAA-163 / DSM 7039 / HB27).